The chain runs to 502 residues: Glycerol kinase (502 aa).

T14 is a binding site for ADP. Residues T14, T15, and S16 each contribute to the ATP site. T14 contacts sn-glycerol 3-phosphate. Position 18 (R18) interacts with ADP. Residues R84, E85, and Y136 each coordinate sn-glycerol 3-phosphate. Positions 84, 85, and 136 each coordinate glycerol. H232 carries the phosphohistidine; by HPr modification. D246 lines the sn-glycerol 3-phosphate pocket. 2 residues coordinate glycerol: D246 and Q247. ADP contacts are provided by T268 and G311. Residues T268, G311, Q315, and G412 each contribute to the ATP site. ADP is bound by residues G412 and N416.

It belongs to the FGGY kinase family. As to quaternary structure, homotetramer and homodimer (in equilibrium). Post-translationally, the phosphoenolpyruvate-dependent sugar phosphotransferase system (PTS), including enzyme I, and histidine-containing protein (HPr) are required for the phosphorylation, which leads to the activation of the enzyme.

The enzyme catalyses glycerol + ATP = sn-glycerol 3-phosphate + ADP + H(+). The protein operates within polyol metabolism; glycerol degradation via glycerol kinase pathway; sn-glycerol 3-phosphate from glycerol: step 1/1. Activated by phosphorylation and inhibited by fructose 1,6-bisphosphate (FBP). Its function is as follows. Key enzyme in the regulation of glycerol uptake and metabolism. Catalyzes the phosphorylation of glycerol to yield sn-glycerol 3-phosphate. The sequence is that of Glycerol kinase from Streptococcus sanguinis (strain SK36).